The primary structure comprises 119 residues: Large ribosomal subunit protein uL14 (119 aa).

It belongs to the universal ribosomal protein uL14 family. As to quaternary structure, part of the 50S ribosomal subunit. Forms a cluster with proteins L3 and L19. In the 70S ribosome, L14 and L19 interact and together make contacts with the 16S rRNA in bridges B5 and B8.

Functionally, binds to 23S rRNA. Forms part of two intersubunit bridges in the 70S ribosome. This chain is Large ribosomal subunit protein uL14, found in Ehrlichia canis (strain Jake).